Reading from the N-terminus, the 205-residue chain is Pre-rRNA-processing protein TSR2 (205 aa).

A disordered region spans residues 144–205; that stretch reads SKRVVHIEGD…LVQPKGRRKH (62 aa). The segment covering 152-177 has biased composition (acidic residues); sequence GDDDEDDEDVEDYDDEDEDEEMDEVV.

Belongs to the TSR2 family. As to quaternary structure, interacts with RPS26A.

The protein localises to the cytoplasm. It localises to the nucleus. Its function is as follows. Required for 20S pre-rRNA processing. This Saccharomyces cerevisiae (strain ATCC 204508 / S288c) (Baker's yeast) protein is Pre-rRNA-processing protein TSR2.